Consider the following 152-residue polypeptide: Deoxyuridine 5'-triphosphate nucleotidohydrolase (152 aa).

Substrate contacts are provided by residues 71-73 (RSG), Asn-84, 88-90 (LID), and Met-98.

This sequence belongs to the dUTPase family. The cofactor is Mg(2+).

The enzyme catalyses dUTP + H2O = dUMP + diphosphate + H(+). It functions in the pathway pyrimidine metabolism; dUMP biosynthesis; dUMP from dCTP (dUTP route): step 2/2. In terms of biological role, this enzyme is involved in nucleotide metabolism: it produces dUMP, the immediate precursor of thymidine nucleotides and it decreases the intracellular concentration of dUTP so that uracil cannot be incorporated into DNA. The sequence is that of Deoxyuridine 5'-triphosphate nucleotidohydrolase from Coxiella burnetii (strain RSA 331 / Henzerling II).